A 310-amino-acid polypeptide reads, in one-letter code: Ribosomal RNA small subunit methyltransferase H (310 aa).

S-adenosyl-L-methionine is bound by residues 33-35 (GGH), Asp52, Phe79, Asp98, and Gln105.

Belongs to the methyltransferase superfamily. RsmH family.

The protein resides in the cytoplasm. The catalysed reaction is cytidine(1402) in 16S rRNA + S-adenosyl-L-methionine = N(4)-methylcytidine(1402) in 16S rRNA + S-adenosyl-L-homocysteine + H(+). Functionally, specifically methylates the N4 position of cytidine in position 1402 (C1402) of 16S rRNA. This Campylobacter jejuni subsp. doylei (strain ATCC BAA-1458 / RM4099 / 269.97) protein is Ribosomal RNA small subunit methyltransferase H.